Here is a 292-residue protein sequence, read N- to C-terminus: Nitrogenase iron protein 1 (292 aa).

Residue 12 to 19 (GKGGIGKS) coordinates ATP. C101 contacts [4Fe-4S] cluster. R104 is modified (ADP-ribosylarginine; by dinitrogenase reductase ADP-ribosyltransferase). C135 is a binding site for [4Fe-4S] cluster.

It belongs to the NifH/BchL/ChlL family. Homodimer. The cofactor is [4Fe-4S] cluster. Post-translationally, the reversible ADP-ribosylation of Arg-104 inactivates the nitrogenase reductase and regulates nitrogenase activity.

The catalysed reaction is N2 + 8 reduced [2Fe-2S]-[ferredoxin] + 16 ATP + 16 H2O = H2 + 8 oxidized [2Fe-2S]-[ferredoxin] + 2 NH4(+) + 16 ADP + 16 phosphate + 6 H(+). Functionally, the key enzymatic reactions in nitrogen fixation are catalyzed by the nitrogenase complex, which has 2 components: the iron protein and the molybdenum-iron protein. In Paenibacillus durus (Paenibacillus azotofixans), this protein is Nitrogenase iron protein 1 (nifH1).